A 116-amino-acid polypeptide reads, in one-letter code: Putative gamma-glutamylcyclotransferase PH0828 (116 aa).

13–16 is a substrate binding site; that stretch reads YGTL. The active-site Proton acceptor is E76.

Belongs to the gamma-glutamylcyclotransferase family.

Putative gamma-glutamylcyclotransferase. This Pyrococcus horikoshii (strain ATCC 700860 / DSM 12428 / JCM 9974 / NBRC 100139 / OT-3) protein is Putative gamma-glutamylcyclotransferase PH0828.